The primary structure comprises 407 residues: MMVTVVSNYCQLSQTQLSQTFAEKFTVTEELLQSLKKTALSGDEESIELLHNIALGYDEFGKKAEDILYHIVRNPTNDTLSIIKLIKNACLKLYNLAHTATKHPLKSHDSDNLLFKKLFSPSKLMAIIGEDIPLISEKQSLSKVLLNDKNNELSDGTNFWDKNRQLTTDEIACYLKKIAANAKNTQVNYPTDFYLPNSNSTYLEVALNDNIKSDPSWPKEVQLFPINTGGHWILVSLQKIVNEKNNTQQIKCIIFNSLRALGHEKENSLKRIINSFNSFNCDPTRETPNNKNITDHLTEPEIIFLHADLQQYLSQSCGAFVCMAAQEVIEQMESNSDSAPYTLLKNYADRFKKYSAEEQYEIDFQHRLENRNCYLDKYGDANINHYYRNLEIKNSHPKNRASSKRVS.

Histidine 231 is a catalytic residue. Cysteine 317 (nucleophile) is an active-site residue.

This sequence belongs to the peptidase C79 family.

Its function is as follows. Protease that can act as an efficient and specific deubiquitinating enzyme in vitro. Does not possess desumoylating and deneddylating activities. The physiological substrate is unknown. The chain is Protease ElaD (elaD) from Escherichia coli O157:H7.